The following is a 303-amino-acid chain: Probable cell division protein WhiA (303 aa).

Residues 272–303 (SLQQIADSLDFAITKSGVNHRLRKINKLAEDL) constitute a DNA-binding region (H-T-H motif).

Belongs to the WhiA family.

In terms of biological role, involved in cell division and chromosome segregation. The protein is Probable cell division protein WhiA of Streptococcus equi subsp. zooepidemicus (strain MGCS10565).